Consider the following 683-residue polypeptide: Elongation factor G 2 (683 aa).

The tr-type G domain occupies 4–279 (QQMRNIGIMA…AVVEYLPAPQ (276 aa)). GTP is bound by residues 13–20 (AHVDAGKT), 77–81 (DTPGH), and 131–134 (NKMD).

Belongs to the TRAFAC class translation factor GTPase superfamily. Classic translation factor GTPase family. EF-G/EF-2 subfamily.

Its subcellular location is the cytoplasm. Functionally, catalyzes the GTP-dependent ribosomal translocation step during translation elongation. During this step, the ribosome changes from the pre-translocational (PRE) to the post-translocational (POST) state as the newly formed A-site-bound peptidyl-tRNA and P-site-bound deacylated tRNA move to the P and E sites, respectively. Catalyzes the coordinated movement of the two tRNA molecules, the mRNA and conformational changes in the ribosome. The polypeptide is Elongation factor G 2 (fusB) (Treponema pallidum (strain Nichols)).